The chain runs to 551 residues: Endolytic murein transglycosylase (551 aa).

The Cytoplasmic portion of the chain corresponds to 1–187; that stretch reads MSEKSREEEK…PKKEKKSHVK (187 aa). The segment at 38–180 is disordered; the sequence is VRTPANEPSA…EGAKPAKPKK (143 aa). Low complexity-rich tracts occupy residues 100 to 110 and 145 to 157; these read PSSPAEESGSR and QAGP…ATET. Over residues 159–174 the composition is skewed to basic and acidic residues; sequence DIIRDTSRRSRREGAK. A helical transmembrane segment spans residues 188–208; the sequence is AFVISFLVFLALLSAGGYFGY. Residues 209–551 are Extracellular-facing; the sequence is QYVLDSLLPI…VAEHVNSKLN (343 aa).

The protein belongs to the transglycosylase MltG family.

The protein localises to the cell membrane. The enzyme catalyses a peptidoglycan chain = a peptidoglycan chain with N-acetyl-1,6-anhydromuramyl-[peptide] at the reducing end + a peptidoglycan chain with N-acetylglucosamine at the non-reducing end.. Functionally, functions as a peptidoglycan terminase that cleaves nascent peptidoglycan strands endolytically to terminate their elongation. Involved in peripheral peptidoglycan (PG) synthesis. The sequence is that of Endolytic murein transglycosylase from Streptococcus pneumoniae serotype 2 (strain D39 / NCTC 7466).